We begin with the raw amino-acid sequence, 863 residues long: Leucine--tRNA ligase (863 aa).

The 'HIGH' region signature appears at 42-52; that stretch reads PYPSGRLHMGH. The 'KMSKS' region motif lies at 622-626; it reads KMSKS. An ATP-binding site is contributed by Lys-625.

Belongs to the class-I aminoacyl-tRNA synthetase family.

Its subcellular location is the cytoplasm. The catalysed reaction is tRNA(Leu) + L-leucine + ATP = L-leucyl-tRNA(Leu) + AMP + diphosphate. This chain is Leucine--tRNA ligase, found in Shewanella loihica (strain ATCC BAA-1088 / PV-4).